A 401-amino-acid polypeptide reads, in one-letter code: Probable tRNA sulfurtransferase (401 aa).

The 106-residue stretch at 60–165 (EPISEQLKGV…EQATYITFKD (106 aa)) folds into the THUMP domain. ATP-binding positions include 183 to 184 (ML), 208 to 209 (HF), arginine 265, glycine 287, and glutamine 296.

The protein belongs to the ThiI family.

Its subcellular location is the cytoplasm. It catalyses the reaction [ThiI sulfur-carrier protein]-S-sulfanyl-L-cysteine + a uridine in tRNA + 2 reduced [2Fe-2S]-[ferredoxin] + ATP + H(+) = [ThiI sulfur-carrier protein]-L-cysteine + a 4-thiouridine in tRNA + 2 oxidized [2Fe-2S]-[ferredoxin] + AMP + diphosphate. The catalysed reaction is [ThiS sulfur-carrier protein]-C-terminal Gly-Gly-AMP + S-sulfanyl-L-cysteinyl-[cysteine desulfurase] + AH2 = [ThiS sulfur-carrier protein]-C-terminal-Gly-aminoethanethioate + L-cysteinyl-[cysteine desulfurase] + A + AMP + 2 H(+). Its pathway is cofactor biosynthesis; thiamine diphosphate biosynthesis. Its function is as follows. Catalyzes the ATP-dependent transfer of a sulfur to tRNA to produce 4-thiouridine in position 8 of tRNAs, which functions as a near-UV photosensor. Also catalyzes the transfer of sulfur to the sulfur carrier protein ThiS, forming ThiS-thiocarboxylate. This is a step in the synthesis of thiazole, in the thiamine biosynthesis pathway. The sulfur is donated as persulfide by IscS. The polypeptide is Probable tRNA sulfurtransferase (Bacillus pumilus (strain SAFR-032)).